We begin with the raw amino-acid sequence, 318 residues long: Transaldolase (318 aa).

Lys-132 acts as the Schiff-base intermediate with substrate in catalysis.

The protein belongs to the transaldolase family. Type 1 subfamily. Homodimer.

The protein localises to the cytoplasm. It carries out the reaction D-sedoheptulose 7-phosphate + D-glyceraldehyde 3-phosphate = D-erythrose 4-phosphate + beta-D-fructose 6-phosphate. It participates in carbohydrate degradation; pentose phosphate pathway; D-glyceraldehyde 3-phosphate and beta-D-fructose 6-phosphate from D-ribose 5-phosphate and D-xylulose 5-phosphate (non-oxidative stage): step 2/3. Transaldolase is important for the balance of metabolites in the pentose-phosphate pathway. The polypeptide is Transaldolase (Shewanella baltica (strain OS155 / ATCC BAA-1091)).